The following is a 272-amino-acid chain: Catechol O-methyltransferase (272 aa).

The Cytoplasmic segment spans residues 1–6; it reads MLEAPP. The chain crosses the membrane as a helical; Signal-anchor for type II membrane protein span at residues 7–27; the sequence is LLLVAGGVGLALLALRWLATT. The Extracellular segment spans residues 28–272; sequence DLQFFGRAFI…YKGLSGPARP (245 aa). S-adenosyl-L-methionine contacts are provided by residues Val-93, Glu-115, Ser-123, Glu-141, 168–171, Ser-170, and Asp-192; that span reads GASQ. A Mg(2+)-binding site is contributed by Asp-192. Lys-195 is a binding site for substrate. Asp-220 and Asn-221 together coordinate Mg(2+). Asn-221 and Glu-250 together coordinate substrate. Ser-267 is modified (phosphoserine).

It belongs to the class I-like SAM-binding methyltransferase superfamily. Cation-dependent O-methyltransferase family. It depends on Mg(2+) as a cofactor.

The protein localises to the cytoplasm. It localises to the cell membrane. The enzyme catalyses a catechol + S-adenosyl-L-methionine = a guaiacol + S-adenosyl-L-homocysteine + H(+). The catalysed reaction is 2-hydroxyestrone + S-adenosyl-L-methionine = 2-hydroxy-3-methoxy-estrone + S-adenosyl-L-homocysteine + H(+). It catalyses the reaction 4-hydroxyestrone + S-adenosyl-L-methionine = 4-methoxyestrone + S-adenosyl-L-homocysteine + H(+). It carries out the reaction 2-hydroxyestrone + S-adenosyl-L-methionine = 2-methoxyestrone + S-adenosyl-L-homocysteine + H(+). The enzyme catalyses 4-hydroxy-17beta-estradiol + S-adenosyl-L-methionine = 4-methoxy-17beta-estradiol + S-adenosyl-L-homocysteine + H(+). The catalysed reaction is 2-hydroxy-17beta-estradiol + S-adenosyl-L-methionine = 2-hydroxy-3-methoxy-17beta-estradiol + S-adenosyl-L-homocysteine + H(+). It catalyses the reaction 2-hydroxy-17beta-estradiol + S-adenosyl-L-methionine = 2-methoxy-17beta-estradiol + S-adenosyl-L-homocysteine + H(+). Its function is as follows. Catalyzes the O-methylation, and thereby the inactivation, of catecholamine neurotransmitters and catechol hormones. Also shortens the biological half-lives of certain neuroactive drugs, like L-DOPA, alpha-methyl DOPA and isoproterenol. This is Catechol O-methyltransferase (COMT) from Bos taurus (Bovine).